We begin with the raw amino-acid sequence, 248 residues long: Pulmonary surfactant-associated protein A (248 aa).

An N-terminal signal peptide occupies residues 1–20 (MSLGSLAFTLFLTVVAGIKC). A glycan (N-linked (GlcNAc...) asparagine) is linked at Asn-21. In terms of domain architecture, Collagen-like spans 28–100 (GSPGIPGTPG…PGERGLPGFP (73 aa)). The segment at 28 to 100 (GSPGIPGTPG…PGERGLPGFP (73 aa)) is disordered. Pro-30, Pro-33, Pro-36, Pro-42, Pro-54, Pro-57, Pro-63, Pro-67, Pro-70, and Pro-76 each carry 4-hydroxyproline. Positions 42–51 (PGRDGRDGIK) are enriched in basic and acidic residues. Residues 54–65 (PGPPGPMGPPGG) are compositionally biased toward pro residues. Residues 69–82 (LPGRDGLPGAPGAP) are compositionally biased toward low complexity. Over residues 84-93 (EHGDKGEPGE) the composition is skewed to basic and acidic residues. One can recognise a C-type lectin domain in the interval 132-248 (LSVGDKVFST…LQYRLAICEF (117 aa)). 2 cysteine pairs are disulfide-bonded: Cys-155–Cys-246 and Cys-224–Cys-238. Residue Asn-207 is glycosylated (N-linked (GlcNAc...) asparagine). Glu-215, Arg-217, Asn-234, and Asp-235 together coordinate Ca(2+).

This sequence belongs to the SFTPA family. In terms of assembly, oligomeric complex of 6 set of homotrimers.

Its subcellular location is the secreted. It localises to the extracellular space. It is found in the extracellular matrix. The protein resides in the surface film. In presence of calcium ions, it binds to surfactant phospholipids and contributes to lower the surface tension at the air-liquid interface in the alveoli of the mammalian lung and is essential for normal respiration. Enhances the expression of MYO18A/SP-R210 on alveolar macrophages. This Mus musculus (Mouse) protein is Pulmonary surfactant-associated protein A (Sftpa1).